A 503-amino-acid chain; its full sequence is Palmitoleoyl-protein carboxylesterase NOTUM (503 aa).

A signal peptide spans 1 to 19 (MGGEVRVLLLLGLLHWVGG). Positions 23 to 53 (RKTWRRRGQQPPQPPPPPPLPQRAEVEPGAG) are disordered. Residues 33-43 (PPQPPPPPPLP) show a composition bias toward pro residues. S88 carries the phosphoserine modification. N103 is a glycosylation site (N-linked (GlcNAc...) asparagine). Active-site charge relay system residues include S239, D347, and H396.

It belongs to the pectinacetylesterase family. Notum subfamily. As to expression, widely expressed. Expressed in lung, ovary, kidney, liver and brain. Not detected in thymus, heart, spleen, stomach, skeletal muscle and bone marrow.

It is found in the secreted. It catalyses the reaction [Wnt protein]-O-(9Z)-hexadecenoyl-L-serine + H2O = [Wnt protein]-L-serine + (9Z)-hexadecenoate + H(+). In terms of biological role, carboxylesterase that acts as a key negative regulator of the Wnt signaling pathway by specifically mediating depalmitoleoylation of WNT proteins. Serine palmitoleoylation of WNT proteins is required for efficient binding to frizzled receptors. The chain is Palmitoleoyl-protein carboxylesterase NOTUM from Mus musculus (Mouse).